Reading from the N-terminus, the 444-residue chain is Prenyltransferase phnF (444 aa).

The protein belongs to the tryptophan dimethylallyltransferase family.

It catalyses the reaction 2,3,4,7,9-pentahydroxy-6-methyl-1H-phenalen-1-one + dimethylallyl diphosphate = 2,4,7,9-tetrahydroxy-6-methyl-8-(2-methylbut-3-en-2-yl)-1-oxo-1H-phenalen-3-ol + diphosphate. It functions in the pathway secondary metabolite biosynthesis. Its function is as follows. Prenyltransferase; part of the gene cluster that mediates the biosynthesis of phenalenones such as herqueinone, compounds that have been reported to treat tumors, bacterial infections and/or mycoses, and rheumatic diseases. The non-reducing polyketide synthase phnA synthesizes the heptaketide backbone and cyclizes it into the angular, hemiketal-containing naphtho-gamma-pyrone prephenalenone. The product template (PT) domain of phnA catalyzes only the C4-C9 aldol condensation, which is unprecedented among known PT domains. The transformation of prephenalenone to phenalenones requires an FAD-dependent monooxygenase phnB, which catalyzes the C2 aromatic hydroxylation of prephenalenone and ring opening of the gamma-pyrone ring simultaneously. Subsequent intramolecular deprotonation of C3 phenolic oxygen accelerates phenalenone ring closure to yield the tricyclic phenalenone core with a C2 hydroxylation. The prenyltransferase phnF further catalyzes reverse C-prenylation of phenalenone by direct electrophilic substitution at C6, or possibly via first a forward O-prenylation of a neighboring phenol in phenalenone, followed by a Claisen rearrangement. The hydroalkoxylation enzyme phnH catalyzes the 5-exo-trig cyclization via acid catalysis after the spontaneous deprotonation of 7-OH, which leads to the formation of the dihydrobenzofuran atrovenetin. Atrovenetin is further converted to deoxyherqueinone by the O-methyltransferase phnC which can methylate C2-OH to stabilize the northern portion of the phenalenone core. Finally, the oxidoreductase phnG converts deoxyherqueinone to herqueinone via C6 hydroxylation. The chain is Prenyltransferase phnF from Penicillium herquei.